Reading from the N-terminus, the 420-residue chain is UDP-N-acetylglucosamine 1-carboxyvinyltransferase 2 (420 aa).

Residue 22-23 coordinates phosphoenolpyruvate; sequence KN. Arg92 contributes to the UDP-N-acetyl-alpha-D-glucosamine binding site. Cys116 serves as the catalytic Proton donor. Residue Cys116 is modified to 2-(S-cysteinyl)pyruvic acid O-phosphothioketal. Residues 121–125, Asp307, and Ile329 each bind UDP-N-acetyl-alpha-D-glucosamine; that span reads RPIDL.

The protein belongs to the EPSP synthase family. MurA subfamily.

The protein localises to the cytoplasm. It catalyses the reaction phosphoenolpyruvate + UDP-N-acetyl-alpha-D-glucosamine = UDP-N-acetyl-3-O-(1-carboxyvinyl)-alpha-D-glucosamine + phosphate. The protein operates within cell wall biogenesis; peptidoglycan biosynthesis. Functionally, cell wall formation. Adds enolpyruvyl to UDP-N-acetylglucosamine. This Streptococcus thermophilus (strain ATCC BAA-250 / LMG 18311) protein is UDP-N-acetylglucosamine 1-carboxyvinyltransferase 2.